We begin with the raw amino-acid sequence, 355 residues long: Beta-ketoacyl-[acyl-carrier-protein] synthase III (355 aa).

Active-site residues include Cys-122 and His-280. The segment at 281–285 (QANMR) is ACP-binding. The active site involves Asn-311.

Belongs to the thiolase-like superfamily. FabH family. Homodimer.

The protein localises to the cytoplasm. It carries out the reaction malonyl-[ACP] + acetyl-CoA + H(+) = 3-oxobutanoyl-[ACP] + CO2 + CoA. Its pathway is lipid metabolism; fatty acid biosynthesis. Functionally, catalyzes the condensation reaction of fatty acid synthesis by the addition to an acyl acceptor of two carbons from malonyl-ACP. Catalyzes the first condensation reaction which initiates fatty acid synthesis and may therefore play a role in governing the total rate of fatty acid production. Possesses both acetoacetyl-ACP synthase and acetyl transacylase activities. Its substrate specificity determines the biosynthesis of branched-chain and/or straight-chain of fatty acids. The chain is Beta-ketoacyl-[acyl-carrier-protein] synthase III from Kocuria rhizophila (strain ATCC 9341 / DSM 348 / NBRC 103217 / DC2201).